The chain runs to 357 residues: Peptide chain release factor 1 (357 aa).

An N5-methylglutamine modification is found at glutamine 232. Positions 284–304 (AERAAERKGQIGSGDRSERIR) are enriched in basic and acidic residues. The segment at 284–308 (AERAAERKGQIGSGDRSERIRTYNY) is disordered.

It belongs to the prokaryotic/mitochondrial release factor family. Post-translationally, methylated by PrmC. Methylation increases the termination efficiency of RF1.

Its subcellular location is the cytoplasm. Its function is as follows. Peptide chain release factor 1 directs the termination of translation in response to the peptide chain termination codons UAG and UAA. This is Peptide chain release factor 1 from Maricaulis maris (strain MCS10) (Caulobacter maris).